The sequence spans 121 residues: Small ribosomal subunit protein uS13 (121 aa).

The tract at residues 93–121 is disordered; it reads RGLPVRGQNTKNNARTRKGKATAIAGKKK. Residues 106-121 show a composition bias toward basic residues; sequence ARTRKGKATAIAGKKK.

The protein belongs to the universal ribosomal protein uS13 family. As to quaternary structure, part of the 30S ribosomal subunit. Forms a loose heterodimer with protein S19. Forms two bridges to the 50S subunit in the 70S ribosome.

In terms of biological role, located at the top of the head of the 30S subunit, it contacts several helices of the 16S rRNA. In the 70S ribosome it contacts the 23S rRNA (bridge B1a) and protein L5 of the 50S subunit (bridge B1b), connecting the 2 subunits; these bridges are implicated in subunit movement. Contacts the tRNAs in the A and P-sites. The protein is Small ribosomal subunit protein uS13 of Streptococcus uberis (strain ATCC BAA-854 / 0140J).